We begin with the raw amino-acid sequence, 269 residues long: tRNA pseudouridine synthase A (269 aa).

The Nucleophile role is filled by D51. Y109 contributes to the substrate binding site.

This sequence belongs to the tRNA pseudouridine synthase TruA family. Homodimer.

It carries out the reaction uridine(38/39/40) in tRNA = pseudouridine(38/39/40) in tRNA. Its function is as follows. Formation of pseudouridine at positions 38, 39 and 40 in the anticodon stem and loop of transfer RNAs. The polypeptide is tRNA pseudouridine synthase A (Haemophilus influenzae (strain 86-028NP)).